The primary structure comprises 356 residues: 4-hydroxy-3-methylbut-2-en-1-yl diphosphate synthase (flavodoxin) (356 aa).

Positions 264, 267, 299, and 306 each coordinate [4Fe-4S] cluster.

It belongs to the IspG family. [4Fe-4S] cluster is required as a cofactor.

The enzyme catalyses (2E)-4-hydroxy-3-methylbut-2-enyl diphosphate + oxidized [flavodoxin] + H2O + 2 H(+) = 2-C-methyl-D-erythritol 2,4-cyclic diphosphate + reduced [flavodoxin]. Its pathway is isoprenoid biosynthesis; isopentenyl diphosphate biosynthesis via DXP pathway; isopentenyl diphosphate from 1-deoxy-D-xylulose 5-phosphate: step 5/6. Converts 2C-methyl-D-erythritol 2,4-cyclodiphosphate (ME-2,4cPP) into 1-hydroxy-2-methyl-2-(E)-butenyl 4-diphosphate. The protein is 4-hydroxy-3-methylbut-2-en-1-yl diphosphate synthase (flavodoxin) of Natranaerobius thermophilus (strain ATCC BAA-1301 / DSM 18059 / JW/NM-WN-LF).